The following is a 327-amino-acid chain: MLFLLLPLLAVLPGDGNADGLKEPLSFHVTWIASFYNHSWKQNLVSGWLSDLQTHTWDSNSSTIVFLCPWSRGNFSNEEWKELETLFRIRTIRSFEGIRRYAHELQFEYPFEIQVTGGCELHSGKVSGSFLQLAYQGSDFVSFQNNSWLPYPVAGNMAKHFCKVLNQNQHENDITHNLLSDTCPRFILGLLDAGKAHLQRQVKPEAWLSHGPSPGPGHLQLVCHVSGFYPKPVWVMWMRGEQEQQGTQRGDILPSADGTWYLRATLEVAAGEAADLSCRVKHSSLEGQDIVLYWEHHSSVGFIILAVIVPLLLLIGLALWFRKRCFC.

An N-terminal signal peptide occupies residues 1–16 (MLFLLLPLLAVLPGDG). Residues 17 to 300 (NADGLKEPLS…VLYWEHHSSV (284 aa)) lie on the Extracellular side of the membrane. N-linked (GlcNAc...) asparagine glycans are attached at residues Asn37, Asn60, and Asn74. Position 90 to 94 (90 to 94 (RTIRS)) interacts with a D-galactosylceramide. Disulfide bonds link Cys119–Cys183 and Cys223–Cys278. An N-linked (GlcNAc...) asparagine glycan is attached at Asn145. A D-galactosylceramide-binding residues include Glu171 and Thr175. The Ig-like domain maps to 184–291 (PRFILGLLDA…HSSLEGQDIV (108 aa)). Residues 301 to 321 (GFIILAVIVPLLLLIGLALWF) traverse the membrane as a helical segment. At 322–327 (RKRCFC) the chain is on the cytoplasmic side.

As to quaternary structure, heterodimer with B2M (beta-2-microglobulin). Interacts with CD74. Expressed on cortical thymocytes, epidermal Langerhans cells, dendritic cells, on certain T-cell leukemias, and in various other tissues.

The protein localises to the cell membrane. It localises to the membrane raft. The protein resides in the endosome membrane. Its function is as follows. Antigen-presenting protein that binds self and non-self lipid and glycolipid antigens and presents them to T-cell receptors on natural killer T-cells. The protein is T-cell surface glycoprotein CD1a (CD1A) of Homo sapiens (Human).